The following is a 79-amino-acid chain: Acyl carrier protein (79 aa).

The region spanning 2 to 77 (SDIEARVKKI…LAIDYAKSHA (76 aa)) is the Carrier domain. An O-(pantetheine 4'-phosphoryl)serine modification is found at S37.

The protein belongs to the acyl carrier protein (ACP) family. In terms of processing, 4'-phosphopantetheine is transferred from CoA to a specific serine of apo-ACP by AcpS. This modification is essential for activity because fatty acids are bound in thioester linkage to the sulfhydryl of the prosthetic group.

Its subcellular location is the cytoplasm. It functions in the pathway lipid metabolism; fatty acid biosynthesis. Carrier of the growing fatty acid chain in fatty acid biosynthesis. This Methylibium petroleiphilum (strain ATCC BAA-1232 / LMG 22953 / PM1) protein is Acyl carrier protein.